We begin with the raw amino-acid sequence, 115 residues long: NADH-ubiquinone oxidoreductase chain 3 (115 aa).

The next 3 membrane-spanning stretches (helical) occupy residues 3-23, 55-75, and 84-104; these read LLLTLLTNTTLALLLVFIAFW, FFLVAITFLLFDLEIALLLPL, and LNTMLTMALFLISLLAASLAY.

This sequence belongs to the complex I subunit 3 family. Core subunit of respiratory chain NADH dehydrogenase (Complex I) which is composed of 45 different subunits. Interacts with TMEM186. Interacts with TMEM242.

The protein resides in the mitochondrion inner membrane. The enzyme catalyses a ubiquinone + NADH + 5 H(+)(in) = a ubiquinol + NAD(+) + 4 H(+)(out). In terms of biological role, core subunit of the mitochondrial membrane respiratory chain NADH dehydrogenase (Complex I) which catalyzes electron transfer from NADH through the respiratory chain, using ubiquinone as an electron acceptor. Essential for the catalytic activity of complex I. The protein is NADH-ubiquinone oxidoreductase chain 3 of Balaenoptera musculus (Blue whale).